We begin with the raw amino-acid sequence, 255 residues long: Triosephosphate isomerase (255 aa).

Residue 9–11 (NWK) coordinates substrate. The active-site Electrophile is H95. The active-site Proton acceptor is E167. Residues G173, S212, and 233–234 (GG) each bind substrate.

This sequence belongs to the triosephosphate isomerase family. In terms of assembly, homodimer.

The protein resides in the cytoplasm. It carries out the reaction D-glyceraldehyde 3-phosphate = dihydroxyacetone phosphate. It participates in carbohydrate biosynthesis; gluconeogenesis. The protein operates within carbohydrate degradation; glycolysis; D-glyceraldehyde 3-phosphate from glycerone phosphate: step 1/1. In terms of biological role, involved in the gluconeogenesis. Catalyzes stereospecifically the conversion of dihydroxyacetone phosphate (DHAP) to D-glyceraldehyde-3-phosphate (G3P). This Yersinia pseudotuberculosis serotype O:1b (strain IP 31758) protein is Triosephosphate isomerase.